A 369-amino-acid chain; its full sequence is Maltose/maltodextrin import ATP-binding protein MalK (369 aa).

An ABC transporter domain is found at 4–234 (VTLHNVSKAY…PVNRFVASFI (231 aa)). 36–43 (GPSGCGKS) serves as a coordination point for ATP.

The protein belongs to the ABC transporter superfamily. Maltooligosaccharide importer (TC 3.A.1.1.1) family. In terms of assembly, the complex is composed of two ATP-binding proteins (MalK), two transmembrane proteins (MalG and MalK) and a solute-binding protein (MalE).

It is found in the cell inner membrane. The enzyme catalyses D-maltose(out) + ATP + H2O = D-maltose(in) + ADP + phosphate + H(+). Its function is as follows. Part of the ABC transporter complex MalEFGK involved in maltose/maltodextrin import. Responsible for energy coupling to the transport system. The sequence is that of Maltose/maltodextrin import ATP-binding protein MalK from Photorhabdus laumondii subsp. laumondii (strain DSM 15139 / CIP 105565 / TT01) (Photorhabdus luminescens subsp. laumondii).